The sequence spans 298 residues: Aspartate carbamoyltransferase catalytic subunit (298 aa).

The carbamoyl phosphate site is built by Arg-50 and Thr-51. Residue Lys-79 participates in L-aspartate binding. The carbamoyl phosphate site is built by Arg-100, His-128, and Gln-131. Arg-161 and Arg-220 together coordinate L-aspartate. Carbamoyl phosphate is bound by residues Leu-259 and Pro-260.

This sequence belongs to the aspartate/ornithine carbamoyltransferase superfamily. ATCase family. In terms of assembly, heterooligomer of catalytic and regulatory chains.

It catalyses the reaction carbamoyl phosphate + L-aspartate = N-carbamoyl-L-aspartate + phosphate + H(+). The protein operates within pyrimidine metabolism; UMP biosynthesis via de novo pathway; (S)-dihydroorotate from bicarbonate: step 2/3. Catalyzes the condensation of carbamoyl phosphate and aspartate to form carbamoyl aspartate and inorganic phosphate, the committed step in the de novo pyrimidine nucleotide biosynthesis pathway. This Sulfurisphaera tokodaii (strain DSM 16993 / JCM 10545 / NBRC 100140 / 7) (Sulfolobus tokodaii) protein is Aspartate carbamoyltransferase catalytic subunit.